Here is a 558-residue protein sequence, read N- to C-terminus: GPI mannosyltransferase 3 (558 aa).

A run of 4 helical transmembrane segments spans residues 53–73 (GLRS…LKLL), 81–101 (VWFA…VSVF), 164–184 (AYCG…LLTL), and 190–210 (VPFL…AVVL). Asn-220 is a glycosylation site (N-linked (GlcNAc...) asparagine). Residues 234–254 (IVLTGLIVLVAVLGGVMVLDY) traverse the membrane as a helical segment. A glycan (N-linked (GlcNAc...) asparagine) is linked at Asn-275. 4 helical membrane passes run 292–312 (VLVG…LVLW), 323–343 (PVLG…LIDH), 348–368 (FVFV…VRWS), and 372–392 (AVVV…IYLM).

This sequence belongs to the glycosyltransferase 22 family. PIGB subfamily.

It is found in the endoplasmic reticulum membrane. It participates in glycolipid biosynthesis; glycosylphosphatidylinositol-anchor biosynthesis. Mannosyltransferase involved in glycosylphosphatidylinositol-anchor biosynthesis. Transfers the third alpha-1,2-mannose to Man2-GlcN-acyl-PI during GPI precursor assembly. The protein is GPI mannosyltransferase 3 (GPI10) of Trypanosoma brucei brucei.